We begin with the raw amino-acid sequence, 163 residues long: NADH-quinone oxidoreductase subunit I (163 aa).

4Fe-4S ferredoxin-type domains lie at 53–83 and 94–123; these read LRRY…IEAG and VRYD…EGPN. C63, C66, C69, C73, C103, C106, C109, and C113 together coordinate [4Fe-4S] cluster.

This sequence belongs to the complex I 23 kDa subunit family. In terms of assembly, NDH-1 is composed of 14 different subunits. Subunits NuoA, H, J, K, L, M, N constitute the membrane sector of the complex. [4Fe-4S] cluster serves as cofactor.

The protein resides in the cell inner membrane. The enzyme catalyses a quinone + NADH + 5 H(+)(in) = a quinol + NAD(+) + 4 H(+)(out). In terms of biological role, NDH-1 shuttles electrons from NADH, via FMN and iron-sulfur (Fe-S) centers, to quinones in the respiratory chain. The immediate electron acceptor for the enzyme in this species is believed to be ubiquinone. Couples the redox reaction to proton translocation (for every two electrons transferred, four hydrogen ions are translocated across the cytoplasmic membrane), and thus conserves the redox energy in a proton gradient. The polypeptide is NADH-quinone oxidoreductase subunit I (Brucella canis (strain ATCC 23365 / NCTC 10854 / RM-666)).